Consider the following 582-residue polypeptide: Potassium-transporting ATPase potassium-binding subunit (582 aa).

Helical transmembrane passes span 11–31 (AVFF…LAWV), 81–101 (LKAV…VLMF), 148–168 (FGIG…MPAF), 195–215 (LLPI…VQTI), 272–292 (VLTL…GAWV), 298–318 (GVAI…VAVV), 379–399 (ALGA…NGVG), 401–421 (GLLN…LMIG), 439–459 (VFVV…AAVV), and 551–571 (GLLI…ALVF).

This sequence belongs to the KdpA family. As to quaternary structure, the system is composed of three essential subunits: KdpA, KdpB and KdpC.

The protein localises to the cell membrane. Functionally, part of the high-affinity ATP-driven potassium transport (or Kdp) system, which catalyzes the hydrolysis of ATP coupled with the electrogenic transport of potassium into the cytoplasm. This subunit binds the extracellular potassium ions and delivers the ions to the membrane domain of KdpB through an intramembrane tunnel. This Halobacterium salinarum (strain ATCC 700922 / JCM 11081 / NRC-1) (Halobacterium halobium) protein is Potassium-transporting ATPase potassium-binding subunit.